Consider the following 135-residue polypeptide: Hemoglobin subunit beta-2 (135 aa).

One can recognise a Globin domain in the interval 2-135 (HWTAEEKALV…VVDALSKGYH (134 aa)). The heme b site is built by His57 and His81.

This sequence belongs to the globin family. As to quaternary structure, hb 2 is a heterotetramer of two alpha and two beta-2 chains. In terms of tissue distribution, red blood cells (at protein level).

In terms of biological role, involved in oxygen transport from gills to the various peripheral tissues. The protein is Hemoglobin subunit beta-2 of Somniosus microcephalus (Greenland sleeper shark).